The chain runs to 166 residues: MVKTLIFKTIKDYSFIKGKLQEIINEHDSGPLSESGNIILVNNPKLHLFTSTFKEDDVRFLEVIKLFNKIDELQYLNGKIKSSENNYGDIVIYFTPTKEQKQYIDQILKLEGLKKNPVALTIGTIKENFNISMEKREAGLKVLMRKVYSFFRGKKITFDEAQSITF.

This is an uncharacterized protein from Invertebrate iridescent virus 6 (IIV-6).